Here is an 876-residue protein sequence, read N- to C-terminus: Liprin-beta-2 (876 aa).

The stretch at 101 to 313 (AASNETYQER…TGLLNQYRKV (213 aa)) forms a coiled coil. 3 positions are modified to phosphoserine: serine 329, serine 363, and serine 387. The interval 356-376 (EMPPRCSSPTVGPPPLPQKSL) is disordered. 2 disordered regions span residues 425-451 (LPGK…PDAT) and 470-500 (VVND…PKGI). A compositionally biased stretch (polar residues) spans 473–489 (DLSSTSSGTESGPQSPL). Residue serine 512 is modified to Phosphoserine. The tract at residues 527–553 (RGGLRATAGPRLSRTRDSKGQKSDANA) is disordered. SAM domains follow at residues 558-622 (WSTE…INTK), 630-693 (LDHI…LHVN), and 718-783 (WSNH…KFNA).

This sequence belongs to the liprin family. Liprin-beta subfamily. As to quaternary structure, forms homodimers and heterodimers. As to expression, widely expressed.

Functionally, may regulate the disassembly of focal adhesions. Did not bind receptor-like tyrosine phosphatases type 2A. The polypeptide is Liprin-beta-2 (PPFIBP2) (Homo sapiens (Human)).